A 396-amino-acid chain; its full sequence is MALKFHPLTSQSPKLPSFRMPQLASLRSPKFVMASTLRSTSREVETLKKPFMPPREVHLQVTHSMPPQKMEIFKSLEDWAEENLLVHLKPVERCWQPQDFLPDSAFEGFHEQVRELRERAKELPDEYFVVLVGDMITEEALPTYQTMLNTLDGVRDETGASPTPWAIWTRAWTAEENRHGDLLNKYLYLSGRVDMRQVEKTIQYLIGSGMDPRTENNPYLGFIYTSFQERATFISHGNTARLAKEHGDIKLAQICGTITADEKRHETAYTKIVEKLFEIDPEGTVIAFEEMMRKKVSMPAHLMYDGRDDNLFHHFSAVAQRLGVYTAKDYADILEFLVGRWKVESLTGLSGEGQKAQDYVCALPARIRKLEERAQGRAKEGPTIPFSWIFDRQVKL.

The N-terminal 33 residues, 1–33, are a transit peptide targeting the chloroplast; that stretch reads MALKFHPLTSQSPKLPSFRMPQLASLRSPKFVM. Glutamate 138, glutamate 176, histidine 179, glutamate 229, glutamate 262, and histidine 265 together coordinate Fe cation.

The protein belongs to the fatty acid desaturase type 2 family. As to quaternary structure, homodimer. Requires Fe(2+) as cofactor.

It is found in the plastid. It localises to the chloroplast. It functions in the pathway lipid metabolism; fatty acid metabolism. Its function is as follows. Introduces a cis double bond in the acyl chain of an acyl-[acyl-carrier protein]. The sequence is that of Acyl-[acyl-carrier-protein] desaturase, chloroplastic from Cucumis sativus (Cucumber).